A 488-amino-acid chain; its full sequence is Aerolysin (488 aa).

The N-terminal stretch at Met1–Ala24 is a signal peptide. Intrachain disulfides connect Cys43–Cys99 and Cys183–Cys188. The segment at Trp69–Tyr85 is interaction with host N-linked glycan. The segment at Tyr256 to Trp288 is part of the transmembrane beta-barrel after proteolytic activation of the toxin and insertion into the host membrane. Residues Arg346 to His355 form an interaction with glycans from host GPI-anchor region. The propeptide occupies Thr444–Gln488.

Belongs to the aerolysin family. In terms of assembly, homodimer in solution; homoheptamer in the host membrane. After binding to GPI-anchored proteins in target membranes and proteolytic removal of the C-terminal propeptide, the protein assembles into a heptameric pre-pore complex. A further conformation change leads to insertion into the host membrane. In terms of processing, proteolytic cleavage and subsequent release of the propeptide trigger a major conformation change, leading to the formation of a heptameric pre-pore that then inserts into the host membrane.

The protein localises to the secreted. The protein resides in the host cell membrane. Functionally, secreted, cytolytic toxin that forms pores in host membranes after proteolytic removal of a C-terminal propeptide, leading to destruction of the membrane permeability barrier and cell death. The pores are formed by transmembrane beta-strands and are approximately 3 nm in diameter. The chain is Aerolysin (asa1) from Aeromonas sobria.